The primary structure comprises 466 residues: Ribulose bisphosphate carboxylase large chain (466 aa).

Lys5 bears the N6,N6,N6-trimethyllysine mark. 2 residues coordinate substrate: Asn114 and Thr164. Lys166 serves as the catalytic Proton acceptor. Lys168 contacts substrate. Mg(2+) is bound by residues Lys192, Asp194, and Glu195. Position 192 is an N6-carboxylysine (Lys192). His285 functions as the Proton acceptor in the catalytic mechanism. Substrate is bound by residues Arg286, His318, and Ser370.

Belongs to the RuBisCO large chain family. Type I subfamily. In terms of assembly, heterohexadecamer of 8 large chains and 8 small chains. The cofactor is Mg(2+).

Its subcellular location is the plastid. It localises to the chloroplast. The catalysed reaction is 2 (2R)-3-phosphoglycerate + 2 H(+) = D-ribulose 1,5-bisphosphate + CO2 + H2O. The enzyme catalyses D-ribulose 1,5-bisphosphate + O2 = 2-phosphoglycolate + (2R)-3-phosphoglycerate + 2 H(+). Its function is as follows. RuBisCO catalyzes two reactions: the carboxylation of D-ribulose 1,5-bisphosphate, the primary event in carbon dioxide fixation, as well as the oxidative fragmentation of the pentose substrate in the photorespiration process. Both reactions occur simultaneously and in competition at the same active site. This is Ribulose bisphosphate carboxylase large chain from Drosera regia (King sundew).